A 226-amino-acid chain; its full sequence is Eukaryotic translation initiation factor 3 subunit K (226 aa).

A PCI domain is found at 44–202; that stretch reads YSLEVNLCLL…IVLPQNEFNH (159 aa).

It belongs to the eIF-3 subunit K family. In terms of assembly, component of the eukaryotic translation initiation factor 3 (eIF-3) complex.

It is found in the cytoplasm. Its function is as follows. Component of the eukaryotic translation initiation factor 3 (eIF-3) complex, which is involved in protein synthesis of a specialized repertoire of mRNAs and, together with other initiation factors, stimulates binding of mRNA and methionyl-tRNAi to the 40S ribosome. The eIF-3 complex specifically targets and initiates translation of a subset of mRNAs involved in cell proliferation. The sequence is that of Eukaryotic translation initiation factor 3 subunit K (TIF3K1) from Arabidopsis thaliana (Mouse-ear cress).